The primary structure comprises 131 residues: Profilin-4 (131 aa).

The protein belongs to the profilin family. In terms of assembly, occurs in many kinds of cells as a complex with monomeric actin in a 1:1 ratio.

The protein resides in the cytoplasm. It is found in the cytoskeleton. In terms of biological role, binds to actin and affects the structure of the cytoskeleton. At high concentrations, profilin prevents the polymerization of actin, whereas it enhances it at low concentrations. By binding to PIP2, it inhibits the formation of IP3 and DG. This Hevea brasiliensis (Para rubber tree) protein is Profilin-4.